The following is a 552-amino-acid chain: 4-coumarate--CoA ligase-like 3 (552 aa).

The ATP site is built by serine 207, serine 208, glycine 209, threonine 210, threonine 211, and lysine 215. (E)-4-coumaroyl-AMP is bound at residue phenylalanine 252. Arginine 273 lines the CoA pocket. An SBD1 region spans residues 275–346 (GLDDMMQAVE…EKYPTVNIFQ (72 aa)). (E)-4-coumaroyl-AMP contacts are provided by glycine 324, glutamine 346, glycine 347, and threonine 351. ATP-binding residues include glutamine 346, glycine 347, threonine 351, aspartate 432, and arginine 447. The SBD2 stretch occupies residues 347–411 (GYALTESHGS…LKGPSISKGY (65 aa)). The (E)-4-coumaroyl-AMP site is built by lysine 449 and lysine 453. CoA-binding residues include lysine 455 and glycine 456. ATP is bound at residue lysine 538. A Microbody targeting signal motif is present at residues 550–552 (SKL).

It belongs to the ATP-dependent AMP-binding enzyme family. Mg(2+) is required as a cofactor.

It localises to the peroxisome. The catalysed reaction is (E)-4-coumarate + ATP + CoA = (E)-4-coumaroyl-CoA + AMP + diphosphate. The enzyme catalyses (E)-4-coumarate + ATP + H(+) = (E)-4-coumaroyl-AMP + diphosphate. It carries out the reaction (E)-4-coumaroyl-AMP + CoA = (E)-4-coumaroyl-CoA + AMP + H(+). Its function is as follows. Carboxylate--CoA ligase that may use 4-coumarate as substrate. Follows a two-step reaction mechanism, wherein the carboxylate substrate first undergoes adenylation by ATP, followed by a thioesterification in the presence of CoA to yield the final CoA thioester. The sequence is that of 4-coumarate--CoA ligase-like 3 from Arabidopsis thaliana (Mouse-ear cress).